A 127-amino-acid chain; its full sequence is DNA-directed RNA polymerase subunit omega (127 aa).

Belongs to the RNA polymerase subunit omega family. The RNAP catalytic core consists of 2 alpha, 1 beta, 1 beta' and 1 omega subunit. When a sigma factor is associated with the core the holoenzyme is formed, which can initiate transcription.

It carries out the reaction RNA(n) + a ribonucleoside 5'-triphosphate = RNA(n+1) + diphosphate. In terms of biological role, promotes RNA polymerase assembly. Latches the N- and C-terminal regions of the beta' subunit thereby facilitating its interaction with the beta and alpha subunits. The chain is DNA-directed RNA polymerase subunit omega (rpoZ) from Rickettsia prowazekii (strain Madrid E).